We begin with the raw amino-acid sequence, 452 residues long: Bifunctional protein GlmU (452 aa).

Residues 1–232 (MTSRTSLTIV…EDEVRGINTK (232 aa)) are pyrophosphorylase. Residues 11–14 (LAAG), Lys25, Gln78, and 83–84 (GT) each bind UDP-N-acetyl-alpha-D-glucosamine. Asp108 contributes to the Mg(2+) binding site. The UDP-N-acetyl-alpha-D-glucosamine site is built by Gly144, Glu158, Asn173, and Asn230. Asn230 serves as a coordination point for Mg(2+). The segment at 233–253 (AQLAEAEAVMQARLRQAALDA) is linker. The N-acetyltransferase stretch occupies residues 254–452 (GVTMIAPETV…KTRGKTRPAK (199 aa)). Positions 319 and 337 each coordinate UDP-N-acetyl-alpha-D-glucosamine. His349 serves as the catalytic Proton acceptor. 2 residues coordinate UDP-N-acetyl-alpha-D-glucosamine: Tyr352 and Asn363. Residues Ala366, 372–373 (NY), Ser391, Ser409, and Arg426 each bind acetyl-CoA.

This sequence in the N-terminal section; belongs to the N-acetylglucosamine-1-phosphate uridyltransferase family. The protein in the C-terminal section; belongs to the transferase hexapeptide repeat family. As to quaternary structure, homotrimer. Mg(2+) serves as cofactor.

The protein localises to the cytoplasm. The enzyme catalyses alpha-D-glucosamine 1-phosphate + acetyl-CoA = N-acetyl-alpha-D-glucosamine 1-phosphate + CoA + H(+). It carries out the reaction N-acetyl-alpha-D-glucosamine 1-phosphate + UTP + H(+) = UDP-N-acetyl-alpha-D-glucosamine + diphosphate. It functions in the pathway nucleotide-sugar biosynthesis; UDP-N-acetyl-alpha-D-glucosamine biosynthesis; N-acetyl-alpha-D-glucosamine 1-phosphate from alpha-D-glucosamine 6-phosphate (route II): step 2/2. Its pathway is nucleotide-sugar biosynthesis; UDP-N-acetyl-alpha-D-glucosamine biosynthesis; UDP-N-acetyl-alpha-D-glucosamine from N-acetyl-alpha-D-glucosamine 1-phosphate: step 1/1. The protein operates within bacterial outer membrane biogenesis; LPS lipid A biosynthesis. Functionally, catalyzes the last two sequential reactions in the de novo biosynthetic pathway for UDP-N-acetylglucosamine (UDP-GlcNAc). The C-terminal domain catalyzes the transfer of acetyl group from acetyl coenzyme A to glucosamine-1-phosphate (GlcN-1-P) to produce N-acetylglucosamine-1-phosphate (GlcNAc-1-P), which is converted into UDP-GlcNAc by the transfer of uridine 5-monophosphate (from uridine 5-triphosphate), a reaction catalyzed by the N-terminal domain. The sequence is that of Bifunctional protein GlmU from Rhodopseudomonas palustris (strain BisA53).